The following is a 350-amino-acid chain: MANIETILKLAEEKILLVHNLKDLQEYKVEFLGKNGIVTSELKKLSSLVNGQERKEFGLKINTLKDKIHNIIKAKVQILEEEELNLKLAADKIDLTIPARRYKQGSIHPITQCMDELIQVFAQFGFTIENGPNIENDFHNFTALNFEYDHPARQMHDTFYLKGRENDKPLLLRTHTSTVQIRAMKNGKPPFRFIAPGRTYRSDSDMTHTPMFHQIEGLVIDKNINMGHLKYVIIKFIRSFFENPNIELRFRPSFFPFTEPSAEVDIRMNKNDKWLEVLGCGMVHPNVLKNVGIDRSEYQGFAFGLGVERFAMLKYNIKDLRRFFEGDIRWLKHYNFESFDIPNLAGGLTK.

Position 259 (glutamate 259) interacts with Mg(2+).

It belongs to the class-II aminoacyl-tRNA synthetase family. Phe-tRNA synthetase alpha subunit type 1 subfamily. As to quaternary structure, tetramer of two alpha and two beta subunits. Mg(2+) serves as cofactor.

It localises to the cytoplasm. It carries out the reaction tRNA(Phe) + L-phenylalanine + ATP = L-phenylalanyl-tRNA(Phe) + AMP + diphosphate + H(+). In Rickettsia typhi (strain ATCC VR-144 / Wilmington), this protein is Phenylalanine--tRNA ligase alpha subunit.